The primary structure comprises 150 residues: uncharacterized protein (150 aa).

A signal peptide spans 1-22 (MVIALKRFSFLASIATLTVLNA). A lipid anchor (N-palmitoyl cysteine) is attached at Cys-23. The S-diacylglycerol cysteine moiety is linked to residue Cys-23.

It belongs to the MG067/MG068/MG395 family.

Its subcellular location is the cell membrane. This is an uncharacterized protein from Mycoplasma pneumoniae (strain ATCC 29342 / M129 / Subtype 1) (Mycoplasmoides pneumoniae).